The sequence spans 562 residues: Furostanol glycoside 26-O-beta-glucosidase (562 aa).

The transit peptide at 1 to 44 directs the protein to the chloroplast; that stretch reads MAAQLGLPLVSCHRGASQAASSSAHLVPGASAIMQAGNRRQKMR. Residues Gln-110, His-214, and 259-260 each bind a beta-D-glucoside; that span reads NE. Catalysis depends on Glu-260, which acts as the Proton donor. A disulfide bond links Cys-279 and Cys-285. A beta-D-glucoside-binding positions include Tyr-401, Glu-472, Trp-518, 525–526, and Phe-534; that span reads EW. The active-site Nucleophile is the Glu-472.

The protein belongs to the glycosyl hydrolase 1 family. As to quaternary structure, heterodimer. The N-terminus of the larger subunit is blocked and the smaller subunit might be derived from the larger one.

It is found in the plastid. The protein resides in the chloroplast. It carries out the reaction protodioscin + H2O = 26-deglucoprotodioscin + D-glucose. With respect to regulation, partially inhibited by glucono-1,5-lactone, conduritol beta-epoxide and diosgenin, but not by beta-sitosterol or cholesterol. Functionally, beta-glucosidase involved in saponin metabolism. Highly specific for the cleavage of C-26-bound glucose moiety of furostanol glycosides such as protogracillin and protodioscin. No activity with nuatigenin glycoside. Convers furostanol glycosides to spirostanol glycosides. The sequence is that of Furostanol glycoside 26-O-beta-glucosidase from Hellenia speciosa (Crepe ginger).